Here is a 249-residue protein sequence, read N- to C-terminus: tRNA (guanine-N(7)-)-methyltransferase (249 aa).

The segment at 1–24 (MHSIPADTGHTPSRAPAGNGSPPA) is disordered. S-adenosyl-L-methionine-binding residues include E81, E106, D133, and D156. Residue D156 is part of the active site. K160 contributes to the substrate binding site. An interaction with RNA region spans residues 162–167 (RHNKRR). Substrate is bound by residues D192 and 227-230 (TKFE).

This sequence belongs to the class I-like SAM-binding methyltransferase superfamily. TrmB family.

It carries out the reaction guanosine(46) in tRNA + S-adenosyl-L-methionine = N(7)-methylguanosine(46) in tRNA + S-adenosyl-L-homocysteine. It participates in tRNA modification; N(7)-methylguanine-tRNA biosynthesis. Catalyzes the formation of N(7)-methylguanine at position 46 (m7G46) in tRNA. In Paracidovorax citrulli (strain AAC00-1) (Acidovorax citrulli), this protein is tRNA (guanine-N(7)-)-methyltransferase.